The following is a 376-amino-acid chain: Queuine tRNA-ribosyltransferase accessory subunit 2 (376 aa).

Residues Cys323, Cys325, Cys328, and His354 each contribute to the Zn(2+) site.

This sequence belongs to the queuine tRNA-ribosyltransferase family. QTRT2 subfamily. Heterodimer of a catalytic subunit and an accessory subunit. It depends on Zn(2+) as a cofactor.

Its subcellular location is the cytoplasm. Its function is as follows. Non-catalytic subunit of the queuine tRNA-ribosyltransferase (TGT) that catalyzes the base-exchange of a guanine (G) residue with queuine (Q) at position 34 (anticodon wobble position) in tRNAs with GU(N) anticodons (tRNA-Asp, -Asn, -His and -Tyr), resulting in the hypermodified nucleoside queuosine (7-(((4,5-cis-dihydroxy-2-cyclopenten-1-yl)amino)methyl)-7-deazaguanosine). This Caenorhabditis briggsae protein is Queuine tRNA-ribosyltransferase accessory subunit 2.